The primary structure comprises 156 residues: Protein OXIDATIVE STRESS 3 LIKE 3 (156 aa).

Positions 1 to 67 (MHYQEQMESL…GLSKHYKGKS (67 aa)) are disordered. Over residues 13–26 (GEERRRGNYTRDVD) the composition is skewed to basic and acidic residues.

It localises to the nucleus. Its function is as follows. Promotes slightly the tolerance to oxidizing chemicals (e.g. diamide). The protein is Protein OXIDATIVE STRESS 3 LIKE 3 of Arabidopsis thaliana (Mouse-ear cress).